Here is a 1368-residue protein sequence, read N- to C-terminus: MQYSFTEKKRIRKSFAKRPIVHQVPFLLATQLESFSTFLQADVPGTQRKPEGLQAAFTSVFPIVSHNGFARLEFVSYALSSPAFNIKECQQRGLTYCSALRAKVRLVILDKESPNKPVVKEVKEQEVYMGEIPLMTPTGSFVINGTERVIVSQLHRSPGVFFEHDKGKTHSSGKLLFSARIIPYRGSWLDFEFDPKDILYFRVDRRRKMPVTILLKAIGLTPEQILANFFVFDNFTLMDEGAQLEFVPERLRGEVARFDITDRDGKVIVQKDKRINAKHIRDLEAAKTKFISVPEDYLLGRVLAKNVVDGDTGEVIASANDEVTESVLEKLREAGIKEIQTLYTNDLDQGPYISSTLRVDETTDKTAARIAIYRMMRPGEPPTEEAVEALFNRLFYSEEAYDLSKVGRMKFNRRVGRDEITGPMTLQDDDILATIKILVELRNGKGEVDDIDHLGNRRVRCVGELAENQFRAGLVRVERAVKERLGQAESENLMPHDLINSKPISSAIREFFGSSQLSQFMDQTNPLSEITHKRRVSALGPGGLTRERAGFEVRDVHPTHYGRVCPIETPEGPNIGLINSLALYAHLNEYGFLETPYRKVVDSKVTDQIDYLSAIEEGRYMIAQANAAIDENGQLVDELVSSREAGETMMVTPDRIQYMDVAPSQIVSVAASLIPFLEHDDANRALMGSNMQRQAVPCLRPEKPVVGTGIERTCAVDSGTTVQAFRGGVVDYVDAGRIVIRVNDDEAVAGEVGVDIYNLIKYTRSNQNTNINQRPIVKMGDKVSRGDVLADGASTDLGELALGQNMLIAFMPWNGYNFEDSILISEKVVADDRYTSIHIEELNVVARDTKLGPEEITRDISNLAEVQLGRLDESGIVYIGAEVEAGDVLVGKVTPKGETQLTPEEKLLRAIFGEKASDVKDTSLRVPSGMSGTVIDVQVFTREGIQRDKRAQQIIDDELKRYRLDLNDQLRIVEGDAFQRLARMLVGKVANGGPKKLAKGTKIDQAYLEDLDHYHWFDIRLADDEAAAQLEAIKNSIEEKRHQFDLAFEEKRKKLTQGDELPPGVLKMVKVYLAVKRRLQPGDKMAGRHGNKGVVSKIVPIEDMPYMADGRPADVVLNPLGVPSRMNVGQVLEVHLGWAAKGLGWRIGEMLQRQAKIEEMRAFLTKIYNDSGRKEDLESFTDDEILELAKNLREGVPFATPVFDGATEEEMGKMLDLAFPDDIAEQLGMNPSKNQVRLYDGRTGEMFERRVTLGYMHYLKLHHLVDDKMHARSTGPYSLVTQQPLGGKAQFGGQRFGEMEVWALEAYGASYVLQEMLTVKSDDVNGRTKVYENLVKGDHVIDAGMPESFNVLVKEIRSLGIDIDLDRN.

It belongs to the RNA polymerase beta chain family. The RNAP catalytic core consists of 2 alpha, 1 beta, 1 beta' and 1 omega subunit. When a sigma factor is associated with the core the holoenzyme is formed, which can initiate transcription.

It catalyses the reaction RNA(n) + a ribonucleoside 5'-triphosphate = RNA(n+1) + diphosphate. In terms of biological role, DNA-dependent RNA polymerase catalyzes the transcription of DNA into RNA using the four ribonucleoside triphosphates as substrates. The protein is DNA-directed RNA polymerase subunit beta of Burkholderia ambifaria (strain MC40-6).